Reading from the N-terminus, the 850-residue chain is AdoMet-dependent rRNA methyltransferase SPB1 (850 aa).

S-adenosyl-L-methionine contacts are provided by Gly58, Trp60, Asp78, Asp94, and Asp119. The Proton acceptor role is filled by Lys159. Residues 273–282 (GETNEMTWTP) are compositionally biased toward polar residues. 4 disordered regions span residues 273-305 (GETN…ARDE), 388-414 (IDKE…NEMK), 529-569 (GISD…RTLN), and 620-646 (AKKN…KQDD). The span at 388 to 400 (IDKELSELGEREK) shows a compositional bias: basic and acidic residues. Positions 397–425 (EREKARKKRERRRRNEMKQREIQRMQMNM) form a coiled coil. Basic residues predominate over residues 401–411 (ARKKRERRRRN). Composition is skewed to acidic residues over residues 537–561 (DESD…DEDD) and 628–638 (SDSEDEEDDIV). Positions 746–773 (LEAKGRKKMRALRRLEQMKKKSELINED) form a coiled coil. The tract at residues 811-850 (KNKGIAGRPRGVTGKYKMVDGTMKKEQRAIRRIKKKMGKK) is disordered. The segment covering 840–850 (IRRIKKKMGKK) has biased composition (basic residues).

This sequence belongs to the class I-like SAM-binding methyltransferase superfamily. RNA methyltransferase RlmE family. SPB1 subfamily. As to quaternary structure, component of the nucleolar and nucleoplasmic pre-60S ribosomal particle.

It is found in the nucleus. The protein localises to the nucleolus. The enzyme catalyses a ribonucleotide in rRNA + S-adenosyl-L-methionine = a 2'-O-methylribonucleotide in rRNA + S-adenosyl-L-homocysteine + H(+). Required for proper assembly of pre-ribosomal particles during the biogenesis of the 60S ribosomal subunit. In Yarrowia lipolytica (strain CLIB 122 / E 150) (Yeast), this protein is AdoMet-dependent rRNA methyltransferase SPB1.